A 389-amino-acid chain; its full sequence is 23S rRNA (uracil(747)-C(5))-methyltransferase RlmC (389 aa).

The [4Fe-4S] cluster site is built by Cys5, Cys13, Cys16, and Cys94. Residues Gln219, Phe248, Glu275, and Asn321 each coordinate S-adenosyl-L-methionine. Residue Cys348 is the Nucleophile of the active site.

The protein belongs to the class I-like SAM-binding methyltransferase superfamily. RNA M5U methyltransferase family. RlmC subfamily.

The enzyme catalyses uridine(747) in 23S rRNA + S-adenosyl-L-methionine = 5-methyluridine(747) in 23S rRNA + S-adenosyl-L-homocysteine + H(+). Functionally, catalyzes the formation of 5-methyl-uridine at position 747 (m5U747) in 23S rRNA. The polypeptide is 23S rRNA (uracil(747)-C(5))-methyltransferase RlmC (Mannheimia succiniciproducens (strain KCTC 0769BP / MBEL55E)).